The chain runs to 444 residues: tRNA-2-methylthio-N(6)-dimethylallyladenosine synthase (444 aa).

One can recognise an MTTase N-terminal domain in the interval serine 10 to glutamate 126. Positions 19, 55, 89, 163, 167, and 170 each coordinate [4Fe-4S] cluster. In terms of domain architecture, Radical SAM core spans arginine 149 to glutamate 379. Positions glutamine 382 to valine 444 constitute a TRAM domain.

This sequence belongs to the methylthiotransferase family. MiaB subfamily. In terms of assembly, monomer. Requires [4Fe-4S] cluster as cofactor.

The protein resides in the cytoplasm. The catalysed reaction is N(6)-dimethylallyladenosine(37) in tRNA + (sulfur carrier)-SH + AH2 + 2 S-adenosyl-L-methionine = 2-methylsulfanyl-N(6)-dimethylallyladenosine(37) in tRNA + (sulfur carrier)-H + 5'-deoxyadenosine + L-methionine + A + S-adenosyl-L-homocysteine + 2 H(+). Catalyzes the methylthiolation of N6-(dimethylallyl)adenosine (i(6)A), leading to the formation of 2-methylthio-N6-(dimethylallyl)adenosine (ms(2)i(6)A) at position 37 in tRNAs that read codons beginning with uridine. The protein is tRNA-2-methylthio-N(6)-dimethylallyladenosine synthase of Chlorobaculum tepidum (strain ATCC 49652 / DSM 12025 / NBRC 103806 / TLS) (Chlorobium tepidum).